The sequence spans 472 residues: Protein c-ets-2-B (472 aa).

The region spanning 85–170 is the PNT domain; it reads DTFNGFAKER…EHLEEMMKEY (86 aa). A DNA-binding region (ETS) is located at residues 366–446; the sequence is IQLWQFLLEL…SGKRYVYRFV (81 aa).

The protein belongs to the ETS family.

Its subcellular location is the nucleus. Its function is as follows. Probable transcription factor. In Xenopus laevis (African clawed frog), this protein is Protein c-ets-2-B (ets2-b).